A 443-amino-acid polypeptide reads, in one-letter code: sn-2 acyl-lipid omega-3 desaturase (ferredoxin), chloroplastic (443 aa).

Residues 1-51 constitute a chloroplast transit peptide; that stretch reads MAGLVLSGCAIKPFSQSLPIPTKRFITNPSNINLLHPKDPIFSPNFHGFSR. 2 helical membrane-spanning segments follow: residues 120-140 and 143-163; these read MSYV…AAHL and WLVW…LFVL. Residues 165 to 169 carry the Histidine box-1 motif; it reads HDCGH. Positions 201–205 match the Histidine box-2 motif; it reads HRTHH. The next 2 helical transmembrane spans lie at 281–301 and 304–324; these read TICW…VGPV and LKLY…VTYL. The Histidine box-3 signature appears at 368–372; it reads HVIHH.

The protein belongs to the fatty acid desaturase type 1 family. As to expression, highly expressed in leaves and cotyledons, while no or little expression detected in mature seeds, roots and stems.

The protein localises to the plastid. Its subcellular location is the chloroplast membrane. The enzyme catalyses a (7Z,10Z)-hexadecadienoyl-containing glycerolipid + 2 reduced [2Fe-2S]-[ferredoxin] + O2 + 2 H(+) = a (7Z,10Z,13Z)-hexadecatrienoyl-containing glycerolipid + 2 oxidized [2Fe-2S]-[ferredoxin] + 2 H2O. It catalyses the reaction a (9Z,12Z)-octadecadienoyl-containing glycerolipid + 2 reduced [2Fe-2S]-[ferredoxin] + O2 + 2 H(+) = (9Z,12Z,15Z)-octadecatrienoyl-containing glycerolipid + 2 oxidized [2Fe-2S]-[ferredoxin] + 2 H2O. It functions in the pathway lipid metabolism; polyunsaturated fatty acid biosynthesis. Chloroplast omega-3 fatty acid desaturase introduces the third double bond in the biosynthesis of 18:3, and probably also 16:3 fatty acids, important constituents of plant membranes. It is thought to use ferredoxin as an electron donor and to act on fatty acids esterified to galactolipids, sulfolipids and phosphatidylglycerol. This is sn-2 acyl-lipid omega-3 desaturase (ferredoxin), chloroplastic from Helianthus annuus (Common sunflower).